An 814-amino-acid polypeptide reads, in one-letter code: DNA ligase (814 aa).

Residues 46 to 50, 95 to 96, and Glu129 contribute to the NAD(+) site; these read DAEYD and SL. Lys131 functions as the N6-AMP-lysine intermediate in the catalytic mechanism. The NAD(+) site is built by Arg152, Glu189, Lys305, and Lys329. Zn(2+) contacts are provided by Cys434, Cys437, Cys458, and Cys464. The interval 525–548 is disordered; the sequence is LSAQRRSEGEPAPKKPTKKKGEEE. Residues 735–814 form the BRCT domain; that stretch reads TSAAAFAGKT…DDWLAMLAEA (80 aa).

It belongs to the NAD-dependent DNA ligase family. LigA subfamily. Mg(2+) serves as cofactor. The cofactor is Mn(2+).

The enzyme catalyses NAD(+) + (deoxyribonucleotide)n-3'-hydroxyl + 5'-phospho-(deoxyribonucleotide)m = (deoxyribonucleotide)n+m + AMP + beta-nicotinamide D-nucleotide.. Functionally, DNA ligase that catalyzes the formation of phosphodiester linkages between 5'-phosphoryl and 3'-hydroxyl groups in double-stranded DNA using NAD as a coenzyme and as the energy source for the reaction. It is essential for DNA replication and repair of damaged DNA. This is DNA ligase from Methylorubrum extorquens (strain PA1) (Methylobacterium extorquens).